The sequence spans 431 residues: Trigger factor (431 aa).

The 85-residue stretch at 161–245 folds into the PPIase FKBP-type domain; the sequence is TDIVIGDVQK…VKEIKRMELP (85 aa).

Belongs to the FKBP-type PPIase family. Tig subfamily.

The protein localises to the cytoplasm. It catalyses the reaction [protein]-peptidylproline (omega=180) = [protein]-peptidylproline (omega=0). In terms of biological role, involved in protein export. Acts as a chaperone by maintaining the newly synthesized protein in an open conformation. Functions as a peptidyl-prolyl cis-trans isomerase. The polypeptide is Trigger factor (Chloroherpeton thalassium (strain ATCC 35110 / GB-78)).